The following is a 563-amino-acid chain: MDYKNLVAERIKENTELEVDLIEKLIEIPPKKDMGDYAFPCFQLAKTFRKAPNLIAEELKEKINKEGFEKVVTVGPYLNFFVDKTVLIKDVLEKVLNEKEKYGSSKVGEGKNVVVEYSSPNIAKPFHIGHLFTTAIGNALYKILSFEGYNCIGINHLGDWGTQFGKLISAYRRWVDEEALEKDAIGELLRIYVKFHEEAEKNPELEKEARLNFKKLEDGSEEETELWNRFKDLSLKEFNKVYDMLGIKFDSLAGESFYSDKMDAVVQEIDDKGLLVDSNGAKVVMLDDYNMPPCMIKKSDGATIYATRDLAAAMYRKKTYDFHKCIYVVGTPQALHFKQVFTTLKLMGHDWADDCKHVGFGLVKLANKKLSTRNGDVVFLEDLLNQSVEETLKIINEKNPNLKDKEGTAKKLGIGAVVFTYLKNNRERDIVFDWKEILSFDGETGPYVEYSYARGKSILRKAGELTGEADYSKLSSKEEFELAKLLGGFNDAIMNAIDKLEPAMVTRYVIEVAKAFNKFYNAHGILNAEDNDVKLARVKLVEATCQVIKNALNLLGIDVVEEM.

Positions 120 to 130 (PNIAKPFHIGH) match the 'HIGH' region motif.

This sequence belongs to the class-I aminoacyl-tRNA synthetase family. Monomer.

Its subcellular location is the cytoplasm. The catalysed reaction is tRNA(Arg) + L-arginine + ATP = L-arginyl-tRNA(Arg) + AMP + diphosphate. This is Arginine--tRNA ligase from Clostridium botulinum (strain Loch Maree / Type A3).